The chain runs to 305 residues: UDP-3-O-acyl-N-acetylglucosamine deacetylase (305 aa).

The Zn(2+) site is built by histidine 79, histidine 238, and aspartate 242. Histidine 265 (proton donor) is an active-site residue.

It belongs to the LpxC family. It depends on Zn(2+) as a cofactor.

It carries out the reaction a UDP-3-O-[(3R)-3-hydroxyacyl]-N-acetyl-alpha-D-glucosamine + H2O = a UDP-3-O-[(3R)-3-hydroxyacyl]-alpha-D-glucosamine + acetate. The protein operates within glycolipid biosynthesis; lipid IV(A) biosynthesis; lipid IV(A) from (3R)-3-hydroxytetradecanoyl-[acyl-carrier-protein] and UDP-N-acetyl-alpha-D-glucosamine: step 2/6. In terms of biological role, catalyzes the hydrolysis of UDP-3-O-myristoyl-N-acetylglucosamine to form UDP-3-O-myristoylglucosamine and acetate, the committed step in lipid A biosynthesis. The protein is UDP-3-O-acyl-N-acetylglucosamine deacetylase of Cronobacter sakazakii (strain ATCC BAA-894) (Enterobacter sakazakii).